Consider the following 350-residue polypeptide: MAALVKFFQHPGVRRFSIFVVLTGVLYLFKSMINLILLTFIFTFLMDRLELVVRQFVSQFFRVSQRVVITFLYMLLAVLLTVGGFVFYPVVAAQIQQLVKQIKHIAYHPDSIPFFDEITSVFGDINISSYVKEGFNVVYTYLADISTFGLQVVMALILSMFFLFEKKRLSEFMAKFKTSKLRVFYEEIAFFGSKFARTFGKVLEAQFIIALVNCILTFIALWIMHFPQLFGLSIMVFFLGLIPVAGVVISLIPLSIIAYSTGGGMYVLYIVLVIFAIHAIETYFLNPKLMSAKTELPIFFTFTVLIFSEHFFGIWGLIIGIPIFVFLLDILDVTNKEDRSKGPRENSDKK.

The next 8 membrane-spanning stretches (helical) occupy residues 18 to 38 (IFVVLTGVLYLFKSMINLILL), 67 to 87 (VVITFLYMLLAVLLTVGGFVF), 145 to 165 (ISTFGLQVVMALILSMFFLFE), 207 to 227 (FIIALVNCILTFIALWIMHFP), 229 to 249 (LFGLSIMVFFLGLIPVAGVVI), 257 to 277 (IAYSTGGGMYVLYIVLVIFAI), 289 to 309 (LMSAKTELPIFFTFTVLIFSE), and 311 to 331 (FFGIWGLIIGIPIFVFLLDIL).

This sequence belongs to the autoinducer-2 exporter (AI-2E) (TC 2.A.86) family.

The protein resides in the cell membrane. This is Putative transport protein YdbI (ydbI) from Bacillus subtilis (strain 168).